Reading from the N-terminus, the 480-residue chain is MSKKEKQFVEEITPMEVDFAQWYTDVIKKTDLVDYSPVKGFMVIKPYGYAIWENIQNYMDKRFKETGHKNCYFPLLIPESLLKKEAEHVEGFAPEVAWVTHGGNEELAERLCVRPTSETIICEMYSKWLTSYRDLPFLYNQWCSVVRWEKSTRPFLRTSEFLWQEGHTLHETYEEAQAETLQMLNIYRETAENLLAMPVVIGQKSEKEKFAGAYATYTMEALMHDGKALQAGTSHNLGQHFTTAFDITYSDRNGELKHPYHTSWGVSTRLIGGIIMVHGDNRGLVLPPGIAPTQVVIVPVASHKEGVLDKANELRDRLKDKFRVELDDRDNYSPGWKFNEWEMKGVPIRIEIGPRDIENNQAMLFRRDELEKDAVSLDDLEEAVEKLLEDINNNLLYKAKMMRDEKTYIVKTFDEMKEVMEIKPGFVKAMWCGERACEEHVKAETGVTIRCIPFEQENLGHTCAFCGKEAKHMVYLAKAY.

It belongs to the class-II aminoacyl-tRNA synthetase family. ProS type 3 subfamily. As to quaternary structure, homodimer.

The protein localises to the cytoplasm. The catalysed reaction is tRNA(Pro) + L-proline + ATP = L-prolyl-tRNA(Pro) + AMP + diphosphate. Catalyzes the attachment of proline to tRNA(Pro) in a two-step reaction: proline is first activated by ATP to form Pro-AMP and then transferred to the acceptor end of tRNA(Pro). This chain is Proline--tRNA ligase, found in Alkaliphilus oremlandii (strain OhILAs) (Clostridium oremlandii (strain OhILAs)).